The sequence spans 321 residues: Probable pectate lyase A (321 aa).

Positions 1–20 are cleaved as a signal peptide; sequence MANFKLFLALAACLSGQALA. N-linked (GlcNAc...) asparagine glycosylation is present at asparagine 93. Ca(2+) is bound by residues aspartate 134, aspartate 163, and aspartate 167. Residue arginine 220 is part of the active site.

The protein belongs to the polysaccharide lyase 1 family. The cofactor is Ca(2+).

It is found in the secreted. It carries out the reaction Eliminative cleavage of (1-&gt;4)-alpha-D-galacturonan to give oligosaccharides with 4-deoxy-alpha-D-galact-4-enuronosyl groups at their non-reducing ends.. In terms of biological role, pectinolytic enzyme consist of four classes of enzymes: pectin lyase, polygalacturonase, pectin methylesterase and rhamnogalacturonase. Among pectinolytic enzymes, pectin lyase is the most important in depolymerization of pectin, since it cleaves internal glycosidic bonds of highly methylated pectins. Favors pectate, the anion, over pectin, the methyl ester. In Aspergillus flavus (strain ATCC 200026 / FGSC A1120 / IAM 13836 / NRRL 3357 / JCM 12722 / SRRC 167), this protein is Probable pectate lyase A (plyA).